Here is a 343-residue protein sequence, read N- to C-terminus: Tetraacyldisaccharide 4'-kinase (343 aa).

An ATP-binding site is contributed by 51–58 (TVGGAGKT).

This sequence belongs to the LpxK family.

The catalysed reaction is a lipid A disaccharide + ATP = a lipid IVA + ADP + H(+). It participates in glycolipid biosynthesis; lipid IV(A) biosynthesis; lipid IV(A) from (3R)-3-hydroxytetradecanoyl-[acyl-carrier-protein] and UDP-N-acetyl-alpha-D-glucosamine: step 6/6. Functionally, transfers the gamma-phosphate of ATP to the 4'-position of a tetraacyldisaccharide 1-phosphate intermediate (termed DS-1-P) to form tetraacyldisaccharide 1,4'-bis-phosphate (lipid IVA). The protein is Tetraacyldisaccharide 4'-kinase of Xanthobacter autotrophicus (strain ATCC BAA-1158 / Py2).